Consider the following 377-residue polypeptide: Succinyl-diaminopimelate desuccinylase 2 (377 aa).

H62 contributes to the Zn(2+) binding site. D64 is a catalytic residue. Zn(2+) is bound at residue D95. The active-site Proton acceptor is E129. Zn(2+)-binding residues include E130, E158, and H350.

It belongs to the peptidase M20A family. DapE subfamily. Homodimer. It depends on Zn(2+) as a cofactor. Requires Co(2+) as cofactor.

It carries out the reaction N-succinyl-(2S,6S)-2,6-diaminopimelate + H2O = (2S,6S)-2,6-diaminopimelate + succinate. It functions in the pathway amino-acid biosynthesis; L-lysine biosynthesis via DAP pathway; LL-2,6-diaminopimelate from (S)-tetrahydrodipicolinate (succinylase route): step 3/3. Catalyzes the hydrolysis of N-succinyl-L,L-diaminopimelic acid (SDAP), forming succinate and LL-2,6-diaminopimelate (DAP), an intermediate involved in the bacterial biosynthesis of lysine and meso-diaminopimelic acid, an essential component of bacterial cell walls. The sequence is that of Succinyl-diaminopimelate desuccinylase 2 from Shewanella loihica (strain ATCC BAA-1088 / PV-4).